The following is a 1366-amino-acid chain: MTSTSPKSRRSSGKGRKGSKKKGKQVSQIPPLSKTPPSFRNRIVDKKALKQLVAWAYKNHGTAVTAAMADNLKDLGFKYATQAAVSISVDDLKVPDAKQDLLGEAEQQITATEECYRLGEITEVERHTKVIDTWTETNERLVDAVKKNFNQNDPLNSVWMMANSGARGNMSQVRQLVGMRGLMANPQGEIIDLPIRTNFREGLTVTEYVISSYGARKGLVDTALRTADSGYLTRRLVDVAQDVIVREEDCGTSRAILVKAEDGRFGNRLVGRLTAEQIVGDADEIIAKKDTAIDPELSKKIEKAGLAGIMVRSPLTCEATRSVCRKCYGWALAHNNLVDLGEAVGIIAAQSIGEPGTQLTMRTFHTGGVSTAETGVVRSTIAGKVEFGPNARVRGYRTPHGVEAQQAEVDFTLKVKPTGSGKTQTIEISNGSLIFVDNAQEIAADVTVAQITAGAVKKSVEKATKDVICDLAGQVRYESVIQPREVTDRQGNITLKAQRLGRLWVLAGDVYNLPPNARPVVKANSKVSKGMVLAEASQASEFGGEVRLRDSIGDSREVQIVTTSMTLKDFKLLEESTHTGEIWNLEAKDGTRYRLNSIPGSKISSGEIVAELADDRFRTKTGGLVKYAPGLAIKKARSAKNGFEVSNGGTLIWVPQETHEINKDISLLMIKDRQWIEAGTEVVKDIFSQTAGIVTVTQKNDILREIIVRSGEFHLCNESKVLERFEDEGQMVNPGENIAKGLKADSMVLVQTVESRDGKGLLLRPVEEYTIPDQAQLPELSHVKQEKGPSLGLRATQRLAFKDGELIKSVEGVELLKTQLILDTFETTPQMTVDVEVALDKRAKTINRLRLVILESILVRRDTMSDSSHGSTHTELQIKDNQLVNADDVVATTQILCKEDGIVQLPNAVDDEPIRRLIVERAQDTTVLTAKDNPILKVGERVVDGDLLSKGEPINCCGEVEDIKGNKVTLRLGRPYMVSPDSVLHVRDGDLVQRGDGLALLVFERQKTGDIVQGLPRIEELLEARRPRESAILCKKPGIVEIKQEEDDESVVVKVIESDDSLSEYSILLGRNVMVSDGQEVHAGEFLTDGPVNPHELLECFFGDLRDRKPLLEAAQESIAKLQHRLVTEVQNVYKSQGVSIDDKHIEVIVRQMTSKVRIEDAGDTTLLPGELIEIRQVEDTNQAISVTGGAPAEFTPVLLGITKASLNTDSFISAASFQETTRVLTEAAIEGKSDWLRGLKENVIIGRLIPAGTGFSGFVEELRAEAGPHPDILAEDPAGYRRMQNLRPDYTVEMPVSTAAKSTSVLDDPSEEDLEATRSRHGIDPTTSNFAAFARPSGDDPSQEDQKPDPIALEGLQEEGLLADE.

The segment at 1–40 (MTSTSPKSRRSSGKGRKGSKKKGKQVSQIPPLSKTPPSFR) is disordered. Basic residues predominate over residues 7-24 (KSRRSSGKGRKGSKKKGK). Residues 25 to 38 (QVSQIPPLSKTPPS) show a composition bias toward polar residues. Residues C250, C317, C324, and C327 each coordinate Zn(2+). The segment at 1299–1366 (TAAKSTSVLD…LQEEGLLADE (68 aa)) is disordered. Over residues 1353–1366 (ALEGLQEEGLLADE) the composition is skewed to low complexity.

It belongs to the RNA polymerase beta' chain family. RpoC2 subfamily. As to quaternary structure, in cyanobacteria the RNAP catalytic core is composed of 2 alpha, 1 beta, 1 beta', 1 gamma and 1 omega subunit. When a sigma factor is associated with the core the holoenzyme is formed, which can initiate transcription. It depends on Zn(2+) as a cofactor.

The catalysed reaction is RNA(n) + a ribonucleoside 5'-triphosphate = RNA(n+1) + diphosphate. Functionally, DNA-dependent RNA polymerase catalyzes the transcription of DNA into RNA using the four ribonucleoside triphosphates as substrates. The protein is DNA-directed RNA polymerase subunit beta' of Prochlorococcus marinus (strain MIT 9211).